Here is a 218-residue protein sequence, read N- to C-terminus: N-(5'-phosphoribosyl)anthranilate isomerase (218 aa).

It belongs to the TrpF family.

The enzyme catalyses N-(5-phospho-beta-D-ribosyl)anthranilate = 1-(2-carboxyphenylamino)-1-deoxy-D-ribulose 5-phosphate. It participates in amino-acid biosynthesis; L-tryptophan biosynthesis; L-tryptophan from chorismate: step 3/5. The chain is N-(5'-phosphoribosyl)anthranilate isomerase from Bordetella bronchiseptica (strain ATCC BAA-588 / NCTC 13252 / RB50) (Alcaligenes bronchisepticus).